Here is a 236-residue protein sequence, read N- to C-terminus: Small ribosomal subunit protein uS3 (236 aa).

Residues 39–107 (VREFLKKKLA…PVHLNIEEVR (69 aa)) form the KH type-2 domain. Residues 215–236 (AAQPAEPEKKVRKSGAKNAATS) are disordered.

Belongs to the universal ribosomal protein uS3 family. As to quaternary structure, part of the 30S ribosomal subunit. Forms a tight complex with proteins S10 and S14.

Its function is as follows. Binds the lower part of the 30S subunit head. Binds mRNA in the 70S ribosome, positioning it for translation. In Methylobacillus flagellatus (strain ATCC 51484 / DSM 6875 / VKM B-1610 / KT), this protein is Small ribosomal subunit protein uS3.